The chain runs to 179 residues: uncharacterized protein (179 aa).

The N-terminal stretch at methionine 1–alanine 19 is a signal peptide. Residue cysteine 20 is the site of N-palmitoyl cysteine attachment. Cysteine 20 is lipidated: S-diacylglycerol cysteine.

It localises to the cell membrane. This is an uncharacterized protein from Escherichia coli (strain K12).